Here is a 119-residue protein sequence, read N- to C-terminus: Holo-[acyl-carrier-protein] synthase (119 aa).

Mg(2+) is bound by residues Asp-7 and Glu-56.

Belongs to the P-Pant transferase superfamily. AcpS family. The cofactor is Mg(2+).

The protein resides in the cytoplasm. It carries out the reaction apo-[ACP] + CoA = holo-[ACP] + adenosine 3',5'-bisphosphate + H(+). Functionally, transfers the 4'-phosphopantetheine moiety from coenzyme A to a Ser of acyl-carrier-protein. This Chlamydia trachomatis serovar D (strain ATCC VR-885 / DSM 19411 / UW-3/Cx) protein is Holo-[acyl-carrier-protein] synthase.